The sequence spans 122 residues: Small ribosomal subunit protein uS13 (122 aa).

The interval 99-122 is disordered; sequence RGQRTHTNARTRKGPAKAIAGKKK.

Belongs to the universal ribosomal protein uS13 family. In terms of assembly, part of the 30S ribosomal subunit. Forms a loose heterodimer with protein S19. Forms two bridges to the 50S subunit in the 70S ribosome.

Located at the top of the head of the 30S subunit, it contacts several helices of the 16S rRNA. In the 70S ribosome it contacts the 23S rRNA (bridge B1a) and protein L5 of the 50S subunit (bridge B1b), connecting the 2 subunits; these bridges are implicated in subunit movement. Contacts the tRNAs in the A and P-sites. The polypeptide is Small ribosomal subunit protein uS13 (Cereibacter sphaeroides (strain ATCC 17029 / ATH 2.4.9) (Rhodobacter sphaeroides)).